Reading from the N-terminus, the 390-residue chain is Homeobox protein Meis1 (390 aa).

The MEIS N-terminal domain occupies 108 to 192 (GGDVCSSESF…IDLVIDDREG (85 aa)). Over residues 190-202 (REGGSKSDSEDIT) the composition is skewed to basic and acidic residues. The tract at residues 190 to 279 (REGGSKSDSE…KKRHKKRGIF (90 aa)) is disordered. Polar residues predominate over residues 203 to 213 (RSANLTDQPSW). The homeobox; TALE-type DNA-binding region spans 272 to 334 (RHKKRGIFPK…NARRRIVQPM (63 aa)). Positions 299–329 (YPSEEQKKQLAQDTGLTILQVNNWFINARRR) are interaction with DNA. The segment at 335–390 (IDQSNRAVSQGTPYNPDGQPMGGFVMDGQQHMGIRAPGPMSGMGMNMGMEGQWHYM) is required for transcriptional activation.

This sequence belongs to the TALE/MEIS homeobox family. Interacts with the N-terminal region of PBX1 to form a heterodimer which binds DNA including a cAMP-responsive sequence in CYP17. Also forms heterodimers with PBX2. Forms heterotrimers with PBX1 or PBX2 and a number of HOX proteins including HOXA9, HOXD4 and HOXD9 where it acts as a non-DNA-binding partner. Also forms heterotrimers with PBX1 and HOX proteins including HOXD9 and HOXD10 where PBX1 is the non-DNA-binding partner. Heterodimer with DLX3. Heterodimer with HOXB13. As to expression, expressed at low level in normal immunohepatopoietic tissues, including the fetal liver. Expressed in a subset of myeloid leukemia cell lines, with the highest expression seen in those with a megakaryocytic-erythroid phenotype. Also expressed at high levels in the cerebellum.

It is found in the nucleus. Functionally, acts as a transcriptional regulator of PAX6. Acts as a transcriptional activator of PF4 in complex with PBX1 or PBX2. Required for hematopoiesis, megakaryocyte lineage development and vascular patterning. May function as a cofactor for HOXA7 and HOXA9 in the induction of myeloid leukemias. The protein is Homeobox protein Meis1 (MEIS1) of Homo sapiens (Human).